The chain runs to 1523 residues: ATP-binding cassette sub-family C member 3 (1523 aa).

The Extracellular portion of the chain corresponds to 1–35 (MDRLCGSGELGSKFWDSNLSIYTNTPDLTPCFQNS). N-linked (GlcNAc...) asparagine glycosylation is present at Asn-18. A helical transmembrane segment spans residues 36 to 56 (LLAWVPCIYLWAALPCYLFYL). Residues 57–75 (RHHQLGYIVLSWLSRLKTA) lie on the Cytoplasmic side of the membrane. The helical transmembrane segment at 76 to 96 (LGVLLWCVSWVDLFYSFHGLI) threads the bilayer. Residues 97 to 102 (HGSSPA) are Extracellular-facing. Residues 103-123 (PVFFVTPLVVGITMLLATLLI) traverse the membrane as a helical segment. The Cytoplasmic portion of the chain corresponds to 124–129 (QYERLR). A helical transmembrane segment spans residues 130 to 150 (GVQSSGVLIIFWLLCVICAII). Residues 151–170 (PFRSKILSALAEGKILDPFR) lie on the Extracellular side of the membrane. The chain crosses the membrane as a helical span at residues 171–191 (FTTFYIYFALVFCALILSCFK). Residues 192 to 301 (EKPPLFSPEN…KSKQPSFLRA (110 aa)) lie on the Cytoplasmic side of the membrane. A helical transmembrane segment spans residues 302–324 (LVRTFTSSLLMSACFNLIQNLLG). Positions 310–593 (LLMSACFNLI…LPQLISGLTQ (284 aa)) constitute an ABC transmembrane type-1 1 domain. Residues 325-345 (FVNPQLLSILIRFISDPTAPT) are Extracellular-facing. Residues 346–366 (WWGFLLAGLMFLSSTMQTLIL) form a helical membrane-spanning segment. At 367 to 419 (HQYYHCIFVMALRLRTAIIGVIYRKALVITNSVKRESTVGEMVNLMSVDAQRF) the chain is on the cytoplasmic side. Residues 420–440 (MDVSPFINLLWSAPLQVILAI) traverse the membrane as a helical segment. A topological domain (extracellular) is located at residue Tyr-441. A helical membrane pass occupies residues 442–462 (FLWQILGPSALAGVAVIVLLI). Residues 463-535 (PLNGAVSMKM…KGAYLQAIST (73 aa)) lie on the Cytoplasmic side of the membrane. The helical transmembrane segment at 536–556 (FIWICTPFLVTLITLGVYVYV) threads the bilayer. The Extracellular portion of the chain corresponds to 557–567 (DESNVLDAEKA). Residues 568–588 (FVSLSLFNILKIPLNMLPQLI) traverse the membrane as a helical segment. Residues 589–967 (SGLTQASVSL…YAKSMGLCTT (379 aa)) lie on the Cytoplasmic side of the membrane. Residues 626-850 (ITIHNGTFTW…DGSFANFLRN (225 aa)) form the ABC transporter 1 domain. 660-667 (GPVGCGKS) is an ATP binding site. A phosphoserine mark is found at Ser-903 and Ser-906. The segment covering 903–915 (SSLSSEGEVQNRT) has biased composition (polar residues). Positions 903–923 (SSLSSEGEVQNRTMPKKHTNS) are disordered. In terms of domain architecture, ABC transmembrane type-1 2 spans 967–1248 (TLSICLLYGG…MIRMISDLES (282 aa)). Residues 968-988 (LSICLLYGGQSAAAIGANVWL) form a helical membrane-spanning segment. Over 989-1013 (SAWSNDAEEHGQQNKTSVRLGVYAA) the chain is Extracellular. Asn-1002 carries an N-linked (GlcNAc...) asparagine glycan. The helical transmembrane segment at 1014–1034 (LGILQGLLVMLSAFTMVVGAI) threads the bilayer. Topologically, residues 1035-1071 (QAARLLHEALLHNKIRSPQSFFDTTPSGRILNRFSKD) are cytoplasmic. Residues 1072–1092 (IYVIDEVLAPTILMLLNSFFT) form a helical membrane-spanning segment. Topologically, residues 1093–1096 (SIST) are extracellular. Residues 1097–1117 (IMVIVASTPLFMVVVLPLAVL) traverse the membrane as a helical segment. Residues 1118–1191 (YGFVQRFYVA…YPYIASNRWL (74 aa)) are Cytoplasmic-facing. Residues 1192-1212 (GVHVEFVGNCVVLFAALFAVI) form a helical membrane-spanning segment. Topologically, residues 1213 to 1219 (GRNSLNP) are extracellular. Residues 1220–1240 (GLVGLSVSYALQVTMALNWMI) traverse the membrane as a helical segment. Topologically, residues 1241 to 1523 (RMISDLESNI…YGMAKDAGLA (283 aa)) are cytoplasmic. The ABC transporter 2 domain maps to 1287–1519 (FRNYSVRYRP…GGIFYGMAKD (233 aa)). 1319 to 1326 (GRTGAGKS) contributes to the ATP binding site.

The protein belongs to the ABC transporter superfamily. ABCC family. Conjugate transporter (TC 3.A.1.208) subfamily. Detected throughout the gastrointestinal tract, liver, lung, pancreas, bladder, gall bladder and at low levels in the adrenal gland.

It localises to the basolateral cell membrane. It is found in the basal cell membrane. It catalyses the reaction an S-substituted glutathione(in) + ATP + H2O = an S-substituted glutathione(out) + ADP + phosphate + H(+). It carries out the reaction ATP + H2O + xenobioticSide 1 = ADP + phosphate + xenobioticSide 2.. The catalysed reaction is 17beta-estradiol 17-O-(beta-D-glucuronate)(in) + ATP + H2O = 17beta-estradiol 17-O-(beta-D-glucuronate)(out) + ADP + phosphate + H(+). The enzyme catalyses dehydroepiandrosterone 3-sulfate(in) + ATP + H2O = dehydroepiandrosterone 3-sulfate(out) + ADP + phosphate + H(+). It catalyses the reaction leukotriene C4(in) + ATP + H2O = leukotriene C4(out) + ADP + phosphate + H(+). It carries out the reaction taurocholate(in) + ATP + H2O = taurocholate(out) + ADP + phosphate + H(+). The catalysed reaction is glycocholate(in) + ATP + H2O = glycocholate(out) + ADP + phosphate + H(+). The enzyme catalyses taurolithocholate 3-sulfate(in) + ATP + H2O = taurolithocholate 3-sulfate(out) + ADP + phosphate + H(+). It catalyses the reaction taurochenodeoxycholate 3-sulfate(in) + ATP + H2O = taurochenodeoxycholate 3-sulfate(out) + ADP + phosphate + H(+). It carries out the reaction (4Z,15Z)-bilirubin IXalpha C8-beta-D-glucuronoside(in) + ATP + H2O = (4Z,15Z)-bilirubin IXalpha C8-beta-D-glucuronoside(out) + ADP + phosphate + H(+). The catalysed reaction is (4Z,15Z)-bilirubin IXalpha C8,C12-beta-D-bisglucuronoside(in) + ATP + H2O = (4Z,15Z)-bilirubin IXalpha C8,C12-beta-D-bisglucuronoside(out) + ADP + phosphate + H(+). In terms of biological role, ATP-dependent transporter of the ATP-binding cassette (ABC) family that binds and hydrolyzes ATP to enable active transport of various substrates including many drugs, toxicants and endogenous compound across cell membranes. Transports glucuronide conjugates such as bilirubin diglucuronide, estradiol-17-beta-o-glucuronide and GSH conjugates such as leukotriene C4 (LTC4). Transports also various bile salts (taurocholate, glycocholate, taurochenodeoxycholate-3-sulfate, taurolithocholate- 3-sulfate). Does not contribute substantially to bile salt physiology but provides an alternative route for the export of bile acids and glucuronides from cholestatic hepatocytes. May contribute to regulate the transport of organic compounds in testes across the blood-testis-barrier. The chain is ATP-binding cassette sub-family C member 3 (Abcc3) from Mus musculus (Mouse).